A 352-amino-acid chain; its full sequence is C-C chemokine receptor type 5 (352 aa).

Residues 1–30 lie on the Extracellular side of the membrane; sequence MDYQVSSPIYDINYYTSEPCQKINVKQIAA. A Sulfotyrosine modification is found at Y3. O-linked (GalNAc...) serine glycans are attached at residues S6 and S7. Residues Y10, Y14, and Y15 each carry the sulfotyrosine modification. Disulfide bonds link C20-C269 and C101-C178. Residues 31-58 traverse the membrane as a helical segment; the sequence is RLLPPLYSLVFIFGFVGNMLVILILINC. The Cytoplasmic portion of the chain corresponds to 59 to 68; it reads KRLKSMTDIY. Residues 69-89 traverse the membrane as a helical segment; the sequence is LLNLAISDLFFLLTVPFWAHY. Residues 90–102 are Extracellular-facing; it reads AAAQWDFGNTMCQ. A helical transmembrane segment spans residues 103 to 124; the sequence is LLTGLYFIGFFSGIFFIILLTI. Residues 125-141 are Cytoplasmic-facing; sequence DRYLAVVHAVFALKART. The chain crosses the membrane as a helical span at residues 142-166; it reads VTFGVVTSVITWVVAVFASLPGIIF. Topologically, residues 167 to 198 are extracellular; that stretch reads TRSQKEGLHYTCSSHFPYSQYQFWKNFQTLKI. A helical membrane pass occupies residues 199 to 218; it reads VILGLVLPLLVMVICYSGIL. The Cytoplasmic portion of the chain corresponds to 219-235; that stretch reads KTLLRCRNEKKRHRAVR. A helical transmembrane segment spans residues 236 to 260; it reads LIFTIMIVYFLFWAPYNIVLLLNTF. At 261–277 the chain is on the extracellular side; sequence QEFFGLNNCSSSNRLDQ. Residues 278–301 form a helical membrane-spanning segment; that stretch reads AMQVTETLGMTHCCINPIIYAFVG. Topologically, residues 302 to 352 are cytoplasmic; sequence EKFRNYLLVFFQKHIAKRFCKCCSIFQQEAPERASSVYTRSTGEQEISVGL. 3 S-palmitoyl cysteine lipidation sites follow: C321, C323, and C324. Phosphoserine; by BARK1 is present on residues S336, S337, S342, and S349.

It belongs to the G-protein coupled receptor 1 family. As to quaternary structure, interacts with PRAF2. Efficient ligand binding to CCL3/MIP-1alpha and CCL4/MIP-1beta requires sulfation, O-glycosylation and sialic acid modifications. Glycosylation on Ser-6 is required for efficient binding of CCL4. Interacts with GRK2. Interacts with ARRB1 and ARRB2. Interacts with CNIH4. Interacts with S100A4; this interaction stimulates T-lymphocyte chemotaxis. In terms of assembly, (Microbial infection) Interacts with HIV-1 surface protein gp120. (Microbial infection) May interact with human cytomegalovirus/HHV-5 protein UL78. Sulfated on at least 2 of the N-terminal tyrosines. Sulfation contributes to the efficiency of HIV-1 entry and is required for efficient binding of the chemokines, CCL3 and CCL4. Post-translationally, O-glycosylated, but not N-glycosylated. Ser-6 appears to be the major site even if Ser-7 may be also O-glycosylated. Also sialylated glycans present which contribute to chemokine binding. Thr-16 and Ser-17 may also be glycosylated and, if so, with small moieties such as a T-antigen. In terms of processing, palmitoylation in the C-terminal is important for cell surface expression, and to a lesser extent, for HIV entry. Phosphorylation on serine residues in the C-terminal is stimulated by binding CC chemokines especially by APO-RANTES. Highly expressed in spleen, thymus, in the myeloid cell line THP-1, in the promyeloblastic cell line KG-1a and on CD4+ and CD8+ T-cells. Medium levels in peripheral blood leukocytes and in small intestine. Low levels in ovary and lung.

The protein resides in the cell membrane. Its function is as follows. Receptor for a number of inflammatory CC-chemokines including CCL3/MIP-1-alpha, CCL4/MIP-1-beta and RANTES and subsequently transduces a signal by increasing the intracellular calcium ion level. May play a role in the control of granulocytic lineage proliferation or differentiation. Participates in T-lymphocyte migration to the infection site by acting as a chemotactic receptor. Functionally, (Microbial infection) Acts as a coreceptor (CD4 being the primary receptor) of human immunodeficiency virus-1/HIV-1. This chain is C-C chemokine receptor type 5, found in Homo sapiens (Human).